Here is a 78-residue protein sequence, read N- to C-terminus: DNA-directed RNA polymerase subunit Rpo5 (78 aa).

Belongs to the archaeal Rpo5/eukaryotic RPB5 RNA polymerase subunit family. Part of the RNA polymerase complex.

The protein localises to the cytoplasm. It carries out the reaction RNA(n) + a ribonucleoside 5'-triphosphate = RNA(n+1) + diphosphate. Functionally, DNA-dependent RNA polymerase (RNAP) catalyzes the transcription of DNA into RNA using the four ribonucleoside triphosphates as substrates. The chain is DNA-directed RNA polymerase subunit Rpo5 from Methanococcus maripaludis (strain C6 / ATCC BAA-1332).